The following is a 196-amino-acid chain: HTH-type transcriptional regulator BetI (196 aa).

The region spanning 8–68 (PVRREQLIRA…AAMRQILREL (61 aa)) is the HTH tetR-type domain. Residues 31–50 (TVATIAKKAGLSSGIVAHYF) constitute a DNA-binding region (H-T-H motif).

It participates in amine and polyamine biosynthesis; betaine biosynthesis via choline pathway [regulation]. In terms of biological role, repressor involved in the biosynthesis of the osmoprotectant glycine betaine. It represses transcription of the choline transporter BetT and the genes of BetAB involved in the synthesis of glycine betaine. The polypeptide is HTH-type transcriptional regulator BetI (Stenotrophomonas maltophilia (strain R551-3)).